A 336-amino-acid chain; its full sequence is Holliday junction branch migration complex subunit RuvB (336 aa).

Residues A4–Y184 are large ATPase domain (RuvB-L). ATP is bound by residues I23, R24, G65, K68, T69, T70, E131 to Y133, R174, Y184, and R221. T69 serves as a coordination point for Mg(2+). Positions Q185 to N255 are small ATPAse domain (RuvB-S). Residues A258–P336 are head domain (RuvB-H). DNA is bound by residues R294, R313, and R318.

It belongs to the RuvB family. As to quaternary structure, homohexamer. Forms an RuvA(8)-RuvB(12)-Holliday junction (HJ) complex. HJ DNA is sandwiched between 2 RuvA tetramers; dsDNA enters through RuvA and exits via RuvB. An RuvB hexamer assembles on each DNA strand where it exits the tetramer. Each RuvB hexamer is contacted by two RuvA subunits (via domain III) on 2 adjacent RuvB subunits; this complex drives branch migration. In the full resolvosome a probable DNA-RuvA(4)-RuvB(12)-RuvC(2) complex forms which resolves the HJ.

It is found in the cytoplasm. It carries out the reaction ATP + H2O = ADP + phosphate + H(+). Its function is as follows. The RuvA-RuvB-RuvC complex processes Holliday junction (HJ) DNA during genetic recombination and DNA repair, while the RuvA-RuvB complex plays an important role in the rescue of blocked DNA replication forks via replication fork reversal (RFR). RuvA specifically binds to HJ cruciform DNA, conferring on it an open structure. The RuvB hexamer acts as an ATP-dependent pump, pulling dsDNA into and through the RuvAB complex. RuvB forms 2 homohexamers on either side of HJ DNA bound by 1 or 2 RuvA tetramers; 4 subunits per hexamer contact DNA at a time. Coordinated motions by a converter formed by DNA-disengaged RuvB subunits stimulates ATP hydrolysis and nucleotide exchange. Immobilization of the converter enables RuvB to convert the ATP-contained energy into a lever motion, pulling 2 nucleotides of DNA out of the RuvA tetramer per ATP hydrolyzed, thus driving DNA branch migration. The RuvB motors rotate together with the DNA substrate, which together with the progressing nucleotide cycle form the mechanistic basis for DNA recombination by continuous HJ branch migration. Branch migration allows RuvC to scan DNA until it finds its consensus sequence, where it cleaves and resolves cruciform DNA. This Klebsiella pneumoniae subsp. pneumoniae (strain ATCC 700721 / MGH 78578) protein is Holliday junction branch migration complex subunit RuvB.